Here is a 273-residue protein sequence, read N- to C-terminus: ATP synthase subunit delta (273 aa).

Belongs to the ATPase delta chain family. As to quaternary structure, F-type ATPases have 2 components, F(1) - the catalytic core - and F(0) - the membrane proton channel. F(1) has five subunits: alpha(3), beta(3), gamma(1), delta(1), epsilon(1). F(0) has three main subunits: a(1), b(2) and c(10-14). The alpha and beta chains form an alternating ring which encloses part of the gamma chain. F(1) is attached to F(0) by a central stalk formed by the gamma and epsilon chains, while a peripheral stalk is formed by the delta and b chains.

It localises to the cell membrane. F(1)F(0) ATP synthase produces ATP from ADP in the presence of a proton or sodium gradient. F-type ATPases consist of two structural domains, F(1) containing the extramembraneous catalytic core and F(0) containing the membrane proton channel, linked together by a central stalk and a peripheral stalk. During catalysis, ATP synthesis in the catalytic domain of F(1) is coupled via a rotary mechanism of the central stalk subunits to proton translocation. In terms of biological role, this protein is part of the stalk that links CF(0) to CF(1). It either transmits conformational changes from CF(0) to CF(1) or is implicated in proton conduction. The chain is ATP synthase subunit delta from Streptomyces avermitilis (strain ATCC 31267 / DSM 46492 / JCM 5070 / NBRC 14893 / NCIMB 12804 / NRRL 8165 / MA-4680).